We begin with the raw amino-acid sequence, 118 residues long: Large ribosomal subunit protein uL18 (118 aa).

The protein belongs to the universal ribosomal protein uL18 family. In terms of assembly, part of the 50S ribosomal subunit; part of the 5S rRNA/L5/L18/L25 subcomplex. Contacts the 5S and 23S rRNAs.

Functionally, this is one of the proteins that bind and probably mediate the attachment of the 5S RNA into the large ribosomal subunit, where it forms part of the central protuberance. This is Large ribosomal subunit protein uL18 from Rickettsia felis (strain ATCC VR-1525 / URRWXCal2) (Rickettsia azadi).